The following is a 406-amino-acid chain: Cysteine desulfurase (406 aa).

N6-(pyridoxal phosphate)lysine is present on lysine 226. Cysteine 364 serves as the catalytic Cysteine persulfide intermediate.

This sequence belongs to the class-V pyridoxal-phosphate-dependent aminotransferase family. Csd subfamily. Homodimer. Interacts with SufE and the SufBCD complex composed of SufB, SufC and SufD. The interaction with SufE is required to mediate the direct transfer of the sulfur atom from the S-sulfanylcysteine. Requires pyridoxal 5'-phosphate as cofactor.

It localises to the cytoplasm. It carries out the reaction (sulfur carrier)-H + L-cysteine = (sulfur carrier)-SH + L-alanine. It catalyses the reaction L-selenocysteine + AH2 = hydrogenselenide + L-alanine + A + H(+). Its pathway is cofactor biosynthesis; iron-sulfur cluster biosynthesis. Cysteine desulfurases mobilize the sulfur from L-cysteine to yield L-alanine, an essential step in sulfur metabolism for biosynthesis of a variety of sulfur-containing biomolecules. Component of the suf operon, which is activated and required under specific conditions such as oxidative stress and iron limitation. Acts as a potent selenocysteine lyase in vitro, that mobilizes selenium from L-selenocysteine. Selenocysteine lyase activity is however unsure in vivo. This Escherichia coli O8 (strain IAI1) protein is Cysteine desulfurase.